Here is a 195-residue protein sequence, read N- to C-terminus: ATP-dependent Clp protease proteolytic subunit (195 aa).

Residue S102 is the Nucleophile of the active site. The active site involves H125.

It belongs to the peptidase S14 family. As to quaternary structure, component of the chloroplastic Clp protease core complex.

The protein localises to the plastid. The protein resides in the chloroplast stroma. It catalyses the reaction Hydrolysis of proteins to small peptides in the presence of ATP and magnesium. alpha-casein is the usual test substrate. In the absence of ATP, only oligopeptides shorter than five residues are hydrolyzed (such as succinyl-Leu-Tyr-|-NHMec, and Leu-Tyr-Leu-|-Tyr-Trp, in which cleavage of the -Tyr-|-Leu- and -Tyr-|-Trp bonds also occurs).. Its function is as follows. Cleaves peptides in various proteins in a process that requires ATP hydrolysis. Has a chymotrypsin-like activity. Plays a major role in the degradation of misfolded proteins. In Phaseolus vulgaris (Kidney bean), this protein is ATP-dependent Clp protease proteolytic subunit.